Consider the following 150-residue polypeptide: Small heat shock protein HspE (150 aa).

The sHSP domain maps to 27–137 (VDNGDTYPPY…KPRQIAIDVA (111 aa)).

This sequence belongs to the small heat shock protein (HSP20) family.

The sequence is that of Small heat shock protein HspE (hspE) from Bradyrhizobium diazoefficiens (strain JCM 10833 / BCRC 13528 / IAM 13628 / NBRC 14792 / USDA 110).